Consider the following 443-residue polypeptide: Serine/threonine-protein kinase 40 (443 aa).

Residues 1–11 (MKRRASERDAG) are compositionally biased toward basic and acidic residues. Residues 1–26 (MKRRASERDAGETSARSKALCSSISG) are disordered. Over residues 14–26 (SARSKALCSSISG) the composition is skewed to polar residues. Residues 35-332 (FILGPRLGNS…EVLESLGAII (298 aa)) enclose the Protein kinase domain. ATP contacts are provided by residues 41–49 (LGNSPVPSI) and lysine 66. Aspartate 197 (proton acceptor) is an active-site residue.

It belongs to the protein kinase superfamily. CAMK Ser/Thr protein kinase family.

Its subcellular location is the nucleus. It localises to the cytoplasm. It carries out the reaction L-seryl-[protein] + ATP = O-phospho-L-seryl-[protein] + ADP + H(+). It catalyses the reaction L-threonyl-[protein] + ATP = O-phospho-L-threonyl-[protein] + ADP + H(+). May be a negative regulator of NF-kappa-B and p53-mediated gene transcription. The chain is Serine/threonine-protein kinase 40 (stk40) from Xenopus tropicalis (Western clawed frog).